Here is a 56-residue protein sequence, read N- to C-terminus: Chymotrypsin inhibitor (56 aa).

Intrachain disulfides connect Cys3–Cys36, Cys12–Cys32, Cys16–Cys28, Cys20–Cys56, and Cys38–Cys50. Residues Cys3–Cys56 enclose the TIL domain.

This sequence belongs to the serine protease inhibitor-like (TIL domain-containing) family.

The protein resides in the secreted. Its function is as follows. Chymotrypsin and cathepsin G inhibitor. The sequence is that of Chymotrypsin inhibitor from Apis mellifera (Honeybee).